The chain runs to 3387 residues: Genome polyprotein (3387 aa).

Topologically, residues 1 to 100 are cytoplasmic; sequence MNQRKKVVRP…LNILNGRKRS (100 aa). The hydrophobic; homodimerization of capsid protein C stretch occupies residues 36–71; it reads LFSGKGPLRMVLAFITFLRVLSIPPTAGILKRWGQL. A propeptide spans 100 to 113 (ER anchor for the capsid protein C, removed in mature form by serine protease NS3); it reads STMTLLCLIPTAMA. Residues 101 to 117 form a helical membrane-spanning segment; it reads TMTLLCLIPTAMAFHLS. The Extracellular segment spans residues 118-237; sequence TRDGEPLMIV…GAWKHAQRVE (120 aa). The N-linked (GlcNAc...) asparagine; by host glycan is linked to Asn182. A helical transmembrane segment spans residues 238–258; that stretch reads SWILRNPGFALLAGFMAYMIG. Residues 259–265 are Cytoplasmic-facing; the sequence is QTGIQRT. Residues 266 to 279 traverse the membrane as a helical segment; sequence VFFVLMMLVAPSYG. Residues 280-723 are Extracellular-facing; sequence MRCVGVGNRD…AVHQVFGSVY (444 aa). 6 disulfide bridges follow: Cys282/Cys309, Cys339/Cys400, Cys353/Cys384, Cys371/Cys395, Cys464/Cys564, and Cys581/Cys612. An N-linked (GlcNAc...) asparagine; by host glycan is attached at Asn346. Residues 377-390 form a fusion peptide region; that stretch reads DRGWGNGCGLFGKG. The chain crosses the membrane as a helical span at residues 724–746; that stretch reads TTMFGGVSWMVRILIGFLVLWIG. Topologically, residues 747-750 are cytoplasmic; that stretch reads TNSR. Residues 751–771 form a helical membrane-spanning segment; sequence NTSMAMTCIAVGGITLFLGFT. The Extracellular portion of the chain corresponds to 772–1194; the sequence is VHADTGCAVS…MLGDTMSGRM (423 aa). 6 disulfide bridges follow: Cys778-Cys789, Cys829-Cys917, Cys953-Cys997, Cys1054-Cys1103, Cys1065-Cys1087, and Cys1086-Cys1090. N-linked (GlcNAc...) asparagine; by host glycosylation is found at Asn904 and Asn981. Residues 1195-1218 form a helical membrane-spanning segment; it reads GGQIHLAIMAVFKMSPGYVLGIFL. Topologically, residues 1219–1224 are lumenal; it reads RKLTSR. A helical membrane pass occupies residues 1225-1243; that stretch reads ETALMVIGMAMTTVLSIPH. At 1244-1267 the chain is on the cytoplasmic side; that stretch reads DLMEFIDGISLGLILLKMVTHFDN. Residues 1268-1288 form a helical membrane-spanning segment; sequence TQVGTLALSLTFIRSTMPLVM. Ala1289 is a topological domain (lumenal). Residues 1290 to 1308 traverse the membrane as a helical segment; it reads WRTIMAVLFVVTLIPLCRT. Residues 1309–1316 are Lumenal-facing; sequence SCLQKQSH. A helical transmembrane segment spans residues 1317 to 1337; that stretch reads WVEITALILGAQALPVYLMTL. Residues 1338–1345 are Cytoplasmic-facing; it reads MKGASKRS. A helical membrane pass occupies residues 1346–1366; it reads WPLNEGIMAVGLVSLLGSALL. Over 1367–1369 the chain is Lumenal; that stretch reads KND. The chain crosses the membrane as a helical span at residues 1370 to 1390; the sequence is VPLAGPMVAGGLLLAAYVMSG. Residues 1391 to 1437 are Cytoplasmic-facing; sequence SSADLSLEKAANVQWDEMADITGSSPIIEVKQDEDGSFSIRDIEETN. Residues 1397–1436 form an interacts with and activates NS3 protease region; the sequence is LEKAANVQWDEMADITGSSPIIEVKQDEDGSFSIRDIEET. The helical intramembrane region spans 1438-1458; the sequence is MITLLVKLALITVSGLYPLAI. The Cytoplasmic segment spans residues 1459 to 2146; it reads PVTMTLWYMW…LNELPESLET (688 aa). The 178-residue stretch at 1475-1652 folds into the Peptidase S7 domain; the sequence is SGALWDVPSP…ERTGEPDYEV (178 aa). Catalysis depends on charge relay system; for serine protease NS3 activity residues His1525, Asp1549, and Ser1609. Positions 1654 to 1810 constitute a Helicase ATP-binding domain; the sequence is EDIFRKKRLT…QSNSPIEDIE (157 aa). Residues 1658-1661 are important for RNA-binding; the sequence is RKKR. 1667-1674 is an ATP binding site; the sequence is LHPGAGKT. The DEAH box motif lies at 1758-1761; that stretch reads DEAH. Residues 1820–1987 form the Helicase C-terminal domain; sequence TGFDWITDYQ…IIPTLFGPER (168 aa). Residue Lys1862 is modified to N6-acetyllysine; by host. A helical membrane pass occupies residues 2147 to 2167; the sequence is LMLVALLGAMTAGIFLFFMQG. Residues 2168-2169 lie on the Lumenal side of the membrane; the sequence is KG. The segment at residues 2170-2190 is an intramembrane region (helical); it reads IGKLSMGLIAIAVASGLLWVA. A topological domain (lumenal) is located at residue Glu2191. A helical transmembrane segment spans residues 2192–2212; that stretch reads IQPQWIAASIILEFFLMVLLI. The Cytoplasmic segment spans residues 2213–2225; sequence PEPEKQRTPQDNQ. A helical transmembrane segment spans residues 2226–2246; that stretch reads LIYVILTILTIIGLIAANEMG. Topologically, residues 2247 to 2270 are lumenal; sequence LIEKTKTDFGFYQVKTETTILDVD. Residues 2271–2291 constitute an intramembrane region (helical); sequence LRPASAWTLYAVATTILTPML. The Lumenal segment spans residues 2292–2301; it reads RHTIENTSAN. N-linked (GlcNAc...) asparagine; by host glycosylation is found at Asn2297 and Asn2301. Residues 2302 to 2322 constitute an intramembrane region (helical); sequence LSLAAIANQAAVLMGLGKGWP. At 2323–2343 the chain is on the lumenal side; sequence LHRMDLGVPLLAMGCYSQVNP. A helical transmembrane segment spans residues 2344–2364; it reads TTLIASLVMLLVHYAIIGPGL. Residues 2365–2409 lie on the Cytoplasmic side of the membrane; that stretch reads QAKATREAQKRTAAGIMKNPTVDGITVIDLEPISYDPKFEKQLGQ. A helical membrane pass occupies residues 2410 to 2430; that stretch reads VMLLVLCAGQLLLMRTTWAFC. Residues 2431–2455 are Lumenal-facing; the sequence is EVLTLATGPVLTLWEGNPGRFWNTT. A glycan (N-linked (GlcNAc...) asparagine; by host) is linked at Asn2453. The chain crosses the membrane as a helical span at residues 2456–2476; it reads IAVSTANIFRGSYLAGAGLAF. Residues 2477–3387 are Cytoplasmic-facing; the sequence is SLIKNAQTPR…SAPFESEGVL (911 aa). The region spanning 2489-2751 is the mRNA cap 0-1 NS5-type MT domain; the sequence is TGTTGETLGE…DVDLGAGTRS (263 aa). Ser2543 contributes to the S-adenosyl-L-methionine binding site. Ser2543 carries the phosphoserine modification. Lys2548 acts as the For 2'-O-MTase activity in catalysis. The SUMO-interacting motif motif lies at 2564–2567; the sequence is VVDL. The S-adenosyl-L-methionine site is built by Gly2573, Trp2574, Thr2591, Lys2592, Asp2618, and Val2619. Asp2633 (for 2'-O-MTase activity) is an active-site residue. An S-adenosyl-L-methionine-binding site is contributed by Ile2634. Residues Lys2668 and Glu2704 each act as for 2'-O-MTase activity in the active site. Residue Tyr2706 coordinates S-adenosyl-L-methionine. Zn(2+) is bound by residues Glu2925, His2929, Cys2934, and Cys2937. In terms of domain architecture, RdRp catalytic spans 3016–3166; sequence LIYADDTAGW…PLDERFSTSL (151 aa). Zn(2+) contacts are provided by His3200, Cys3216, and Cys3335.

It in the N-terminal section; belongs to the class I-like SAM-binding methyltransferase superfamily. mRNA cap 0-1 NS5-type methyltransferase family. As to quaternary structure, homodimer. Interacts (via N-terminus) with host EXOC1 (via C-terminus); this interaction results in EXOC1 degradation through the proteasome degradation pathway. Forms heterodimers with envelope protein E in the endoplasmic reticulum and Golgi. In terms of assembly, homodimer; in the endoplasmic reticulum and Golgi. Interacts with protein prM. Interacts with non-structural protein 1. As to quaternary structure, homodimer; Homohexamer when secreted. Interacts with envelope protein E. Interacts (via N-terminus) with serine protease NS3. In terms of assembly, forms a heterodimer with serine protease NS3. May form homooligomers. As to quaternary structure, forms a heterodimer with NS2B. Interacts with NS4B. Interacts with unphosphorylated RNA-directed RNA polymerase NS5; this interaction stimulates RNA-directed RNA polymerase NS5 guanylyltransferase activity. Interacts with host MAVS; this interaction inhibits the synthesis of IFN-beta. Interacts with host AUP1; the interaction occurs in the presence of Dengue virus NS4B and induces lipophagy which facilitates production of virus progeny particles. In terms of assembly, interacts with serine protease NS3. As to quaternary structure, homodimer. Interacts with host STAT2; this interaction inhibits the phosphorylation of the latter, and, when all viral proteins are present (polyprotein), targets STAT2 for degradation. Interacts with serine protease NS3. Interacts with host PAF1 complex; the interaction may prevent the recruitment of the PAF1 complex to interferon-responsive genes, and thus reduces the immune response. Post-translationally, specific enzymatic cleavages in vivo yield mature proteins. Cleavages in the lumen of endoplasmic reticulum are performed by host signal peptidase, whereas cleavages in the cytoplasmic side are performed by serine protease NS3. Signal cleavage at the 2K-4B site requires a prior NS3 protease-mediated cleavage at the 4A-2K site. In terms of processing, cleaved in post-Golgi vesicles by a host furin, releasing the mature small envelope protein M, and peptide pr. This cleavage is incomplete as up to 30% of viral particles still carry uncleaved prM. N-glycosylated. Post-translationally, N-glycosylated. The excreted form is glycosylated and this is required for efficient secretion of the protein from infected cells. In terms of processing, acetylated by host KAT5. Acetylation modulates NS3 RNA-binding and unwinding activities and plays an important positive role for viral replication. Sumoylation of RNA-directed RNA polymerase NS5 increases NS5 protein stability allowing proper viral RNA replication. Post-translationally, phosphorylated on serines residues. This phosphorylation may trigger NS5 nuclear localization.

The protein localises to the virion. It localises to the host nucleus. Its subcellular location is the host cytoplasm. The protein resides in the host perinuclear region. It is found in the secreted. The protein localises to the virion membrane. It localises to the host endoplasmic reticulum membrane. Its subcellular location is the host mitochondrion. The catalysed reaction is Selective hydrolysis of -Xaa-Xaa-|-Yaa- bonds in which each of the Xaa can be either Arg or Lys and Yaa can be either Ser or Ala.. It catalyses the reaction RNA(n) + a ribonucleoside 5'-triphosphate = RNA(n+1) + diphosphate. The enzyme catalyses a ribonucleoside 5'-triphosphate + H2O = a ribonucleoside 5'-diphosphate + phosphate + H(+). It carries out the reaction ATP + H2O = ADP + phosphate + H(+). The catalysed reaction is a 5'-end (5'-triphosphoguanosine)-ribonucleoside in mRNA + S-adenosyl-L-methionine = a 5'-end (N(7)-methyl 5'-triphosphoguanosine)-ribonucleoside in mRNA + S-adenosyl-L-homocysteine. It catalyses the reaction a 5'-end (N(7)-methyl 5'-triphosphoguanosine)-ribonucleoside in mRNA + S-adenosyl-L-methionine = a 5'-end (N(7)-methyl 5'-triphosphoguanosine)-(2'-O-methyl-ribonucleoside) in mRNA + S-adenosyl-L-homocysteine + H(+). Its function is as follows. Plays a role in virus budding by binding to the cell membrane and gathering the viral RNA into a nucleocapsid that forms the core of a mature virus particle. During virus entry, may induce genome penetration into the host cytoplasm after hemifusion induced by the surface proteins. Can migrate to the cell nucleus where it modulates host functions. Overcomes the anti-viral effects of host EXOC1 by sequestering and degrading the latter through the proteasome degradation pathway. In terms of biological role, inhibits RNA silencing by interfering with host Dicer. Prevents premature fusion activity of envelope proteins in trans-Golgi by binding to envelope protein E at pH6.0. After virion release in extracellular space, gets dissociated from E dimers. Functionally, acts as a chaperone for envelope protein E during intracellular virion assembly by masking and inactivating envelope protein E fusion peptide. prM is the only viral peptide matured by host furin in the trans-Golgi network probably to avoid catastrophic activation of the viral fusion activity in acidic Golgi compartment prior to virion release. prM-E cleavage is inefficient, and many virions are only partially matured. These uncleaved prM would play a role in immune evasion. Its function is as follows. May play a role in virus budding. Exerts cytotoxic effects by activating a mitochondrial apoptotic pathway through M ectodomain. May display a viroporin activity. In terms of biological role, binds to host cell surface receptor and mediates fusion between viral and cellular membranes. Envelope protein is synthesized in the endoplasmic reticulum in the form of heterodimer with protein prM. They play a role in virion budding in the ER, and the newly formed immature particle is covered with 60 spikes composed of heterodimer between precursor prM and envelope protein E. The virion is transported to the Golgi apparatus where the low pH causes dissociation of PrM-E heterodimers and formation of E homodimers. prM-E cleavage is inefficient, and many virions are only partially matured. These uncleaved prM would play a role in immune evasion. Involved in immune evasion, pathogenesis and viral replication. Once cleaved off the polyprotein, is targeted to three destinations: the viral replication cycle, the plasma membrane and the extracellular compartment. Essential for viral replication. Required for formation of the replication complex and recruitment of other non-structural proteins to the ER-derived membrane structures. Excreted as a hexameric lipoparticle that plays a role against host immune response. Antagonizing the complement function. Binds to the host macrophages and dendritic cells. Inhibits signal transduction originating from Toll-like receptor 3 (TLR3). Functionally, disrupts the host endothelial glycocalyx layer of host pulmonary microvascular endothelial cells, inducing degradation of sialic acid and shedding of heparan sulfate proteoglycans. NS1 induces expression of sialidases, heparanase, and activates cathepsin L, which activates heparanase via enzymatic cleavage. These effects are probably linked to the endothelial hyperpermeability observed in severe dengue disease. Its function is as follows. Component of the viral RNA replication complex that functions in virion assembly and antagonizes the host immune response. In terms of biological role, required cofactor for the serine protease function of NS3. May have membrane-destabilizing activity and form viroporins. Displays three enzymatic activities: serine protease, NTPase and RNA helicase. NS3 serine protease, in association with NS2B, performs its autocleavage and cleaves the polyprotein at dibasic sites in the cytoplasm: C-prM, NS2A-NS2B, NS2B-NS3, NS3-NS4A, NS4A-2K and NS4B-NS5. NS3 RNA helicase binds RNA and unwinds dsRNA in the 3' to 5' direction. Functionally, regulates the ATPase activity of the NS3 helicase activity. NS4A allows NS3 helicase to conserve energy during unwinding. Plays a role in the inhibition of the host innate immune response. Interacts with host MAVS and thereby prevents the interaction between RIGI and MAVS. In turn, IFN-beta production is impaired. Interacts with host AUP1 which mediates induction of lipophagy in host cells and facilitates production of virus progeny particles. Its function is as follows. Functions as a signal peptide for NS4B and is required for the interferon antagonism activity of the latter. In terms of biological role, induces the formation of ER-derived membrane vesicles where the viral replication takes place. Inhibits interferon (IFN)-induced host STAT1 phosphorylation and nuclear translocation, thereby preventing the establishment of cellular antiviral state by blocking the IFN-alpha/beta pathway. Replicates the viral (+) and (-) RNA genome, and performs the capping of genomes in the cytoplasm. NS5 methylates viral RNA cap at guanine N-7 and ribose 2'-O positions. Besides its role in RNA genome replication, also prevents the establishment of cellular antiviral state by blocking the interferon-alpha/beta (IFN-alpha/beta) signaling pathway. Inhibits host TYK2 and STAT2 phosphorylation, thereby preventing activation of JAK-STAT signaling pathway. May reduce immune responses by preventing the recruitment of the host PAF1 complex to interferon-responsive genes. In Aedes aegypti (Yellowfever mosquito), this protein is Genome polyprotein.